We begin with the raw amino-acid sequence, 638 residues long: Threonine--tRNA ligase (638 aa).

A TGS domain is found at 1–61; the sequence is MPIITLPDGS…NKDSKVVIIT (61 aa). The interval 242–533 is catalytic; the sequence is DHRKLGKKHS…LIEQYEAKFP (292 aa). Cysteine 333, histidine 384, and histidine 510 together coordinate Zn(2+).

This sequence belongs to the class-II aminoacyl-tRNA synthetase family. Homodimer. Zn(2+) serves as cofactor.

It is found in the cytoplasm. The catalysed reaction is tRNA(Thr) + L-threonine + ATP = L-threonyl-tRNA(Thr) + AMP + diphosphate + H(+). Catalyzes the attachment of threonine to tRNA(Thr) in a two-step reaction: L-threonine is first activated by ATP to form Thr-AMP and then transferred to the acceptor end of tRNA(Thr). Also edits incorrectly charged L-seryl-tRNA(Thr). The sequence is that of Threonine--tRNA ligase from Prochlorococcus marinus (strain AS9601).